The primary structure comprises 854 residues: DNA mismatch repair protein MutS (854 aa).

Position 614–621 (614–621 (GPNMGGKS)) interacts with ATP.

It belongs to the DNA mismatch repair MutS family.

In terms of biological role, this protein is involved in the repair of mismatches in DNA. It is possible that it carries out the mismatch recognition step. This protein has a weak ATPase activity. This chain is DNA mismatch repair protein MutS, found in Sodalis glossinidius (strain morsitans).